The following is a 389-amino-acid chain: S-adenosylmethionine synthase (389 aa).

Residue H17 coordinates ATP. D19 is a binding site for Mg(2+). Position 45 (E45) interacts with K(+). L-methionine is bound by residues E58 and Q101. Residues 101-111 form a flexible loop region; that stretch reads QSPDISQGVTE. ATP contacts are provided by residues 168–170, 234–235, D243, 249–250, A266, and K270; these read DSK, RF, and RK. Position 243 (D243) interacts with L-methionine. An L-methionine-binding site is contributed by K274.

The protein belongs to the AdoMet synthase family. In terms of assembly, homotetramer; dimer of dimers. Mg(2+) is required as a cofactor. Requires K(+) as cofactor.

Its subcellular location is the cytoplasm. The catalysed reaction is L-methionine + ATP + H2O = S-adenosyl-L-methionine + phosphate + diphosphate. It functions in the pathway amino-acid biosynthesis; S-adenosyl-L-methionine biosynthesis; S-adenosyl-L-methionine from L-methionine: step 1/1. Catalyzes the formation of S-adenosylmethionine (AdoMet) from methionine and ATP. The overall synthetic reaction is composed of two sequential steps, AdoMet formation and the subsequent tripolyphosphate hydrolysis which occurs prior to release of AdoMet from the enzyme. The sequence is that of S-adenosylmethionine synthase from Syntrophotalea carbinolica (strain DSM 2380 / NBRC 103641 / GraBd1) (Pelobacter carbinolicus).